The chain runs to 389 residues: Lipid-A-disaccharide synthase (389 aa).

This sequence belongs to the LpxB family.

It carries out the reaction a lipid X + a UDP-2-N,3-O-bis[(3R)-3-hydroxyacyl]-alpha-D-glucosamine = a lipid A disaccharide + UDP + H(+). It functions in the pathway bacterial outer membrane biogenesis; LPS lipid A biosynthesis. Functionally, condensation of UDP-2,3-diacylglucosamine and 2,3-diacylglucosamine-1-phosphate to form lipid A disaccharide, a precursor of lipid A, a phosphorylated glycolipid that anchors the lipopolysaccharide to the outer membrane of the cell. The polypeptide is Lipid-A-disaccharide synthase (Paraburkholderia phytofirmans (strain DSM 17436 / LMG 22146 / PsJN) (Burkholderia phytofirmans)).